Reading from the N-terminus, the 46-residue chain is Large ribosomal subunit protein bL34c (46 aa).

Belongs to the bacterial ribosomal protein bL34 family.

It is found in the plastid. The protein resides in the chloroplast. The chain is Large ribosomal subunit protein bL34c (rpl34) from Guillardia theta (Cryptophyte).